A 203-amino-acid polypeptide reads, in one-letter code: Cilia- and flagella-associated protein 20 (203 aa).

Belongs to the CFAP20 family.

It is found in the nucleus. The protein resides in the cytoplasm. It localises to the cytoskeleton. The protein localises to the microtubule organizing center. Its subcellular location is the centrosome. It is found in the centriole. The protein resides in the cilium basal body. It localises to the cilium axoneme. Its function is as follows. Cilium- and flagellum-specific protein that plays a role in axonemal structure organization and motility. Microtubule inner protein (MIP) part of the dynein-decorated doublet microtubules (DMTs) in cilia axoneme, which is required for motile cilia beating. Involved in the regulation of the size and morphology of cilia. Required for axonemal microtubules polyglutamylation. This is Cilia- and flagella-associated protein 20 from Caenorhabditis briggsae.